The sequence spans 391 residues: Phosphoglycerate kinase (391 aa).

Substrate is bound by residues 21-23 (DLN), arginine 36, 59-62 (HLGR), arginine 113, and arginine 146. Residues lysine 197, glutamate 319, and 345 to 348 (GGDT) contribute to the ATP site.

This sequence belongs to the phosphoglycerate kinase family. Monomer.

Its subcellular location is the cytoplasm. The catalysed reaction is (2R)-3-phosphoglycerate + ATP = (2R)-3-phospho-glyceroyl phosphate + ADP. It functions in the pathway carbohydrate degradation; glycolysis; pyruvate from D-glyceraldehyde 3-phosphate: step 2/5. In Xanthomonas euvesicatoria pv. vesicatoria (strain 85-10) (Xanthomonas campestris pv. vesicatoria), this protein is Phosphoglycerate kinase.